A 383-amino-acid chain; its full sequence is Acetylornithine deacetylase (383 aa).

H80 is a binding site for Zn(2+). Residue D82 is part of the active site. Position 112 (D112) interacts with Zn(2+). Residue E144 is part of the active site. The Zn(2+) site is built by E145, E169, and H355.

Belongs to the peptidase M20A family. ArgE subfamily. Homodimer. Zn(2+) is required as a cofactor. The cofactor is Co(2+). Glutathione serves as cofactor.

The protein resides in the cytoplasm. The catalysed reaction is N(2)-acetyl-L-ornithine + H2O = L-ornithine + acetate. Its pathway is amino-acid biosynthesis; L-arginine biosynthesis; L-ornithine from N(2)-acetyl-L-ornithine (linear): step 1/1. Its function is as follows. Catalyzes the hydrolysis of the amide bond of N(2)-acetylated L-amino acids. Cleaves the acetyl group from N-acetyl-L-ornithine to form L-ornithine, an intermediate in L-arginine biosynthesis pathway, and a branchpoint in the synthesis of polyamines. In Escherichia coli O8 (strain IAI1), this protein is Acetylornithine deacetylase.